A 156-amino-acid chain; its full sequence is Arginine repressor (156 aa).

This sequence belongs to the ArgR family.

The protein resides in the cytoplasm. It participates in amino-acid biosynthesis; L-arginine biosynthesis [regulation]. In terms of biological role, regulates arginine biosynthesis genes. The protein is Arginine repressor of Vibrio atlanticus (strain LGP32) (Vibrio splendidus (strain Mel32)).